The primary structure comprises 323 residues: Beta-ketoacyl-[acyl-carrier-protein] synthase III (323 aa).

Catalysis depends on residues Cys-112 and His-250. Residues 251 to 255 form an ACP-binding region; the sequence is QANQR. Asn-280 is an active-site residue.

This sequence belongs to the thiolase-like superfamily. FabH family. Homodimer.

It localises to the cytoplasm. It carries out the reaction malonyl-[ACP] + acetyl-CoA + H(+) = 3-oxobutanoyl-[ACP] + CO2 + CoA. It functions in the pathway lipid metabolism; fatty acid biosynthesis. In terms of biological role, catalyzes the condensation reaction of fatty acid synthesis by the addition to an acyl acceptor of two carbons from malonyl-ACP. Catalyzes the first condensation reaction which initiates fatty acid synthesis and may therefore play a role in governing the total rate of fatty acid production. Possesses both acetoacetyl-ACP synthase and acetyl transacylase activities. Its substrate specificity determines the biosynthesis of branched-chain and/or straight-chain of fatty acids. This is Beta-ketoacyl-[acyl-carrier-protein] synthase III from Oenococcus oeni (strain ATCC BAA-331 / PSU-1).